An 82-amino-acid chain; its full sequence is Beta-neurotoxin Css9 (82 aa).

Positions 1–17 are cleaved as a signal peptide; that stretch reads MKLLMLIVALMIIGVQS. The 64-residue stretch at 18-81 folds into the LCN-type CS-alpha/beta domain; it reads KDGYPMDHKG…VWDRATNKCR (64 aa). Cystine bridges form between cysteine 28–cysteine 80, cysteine 32–cysteine 54, cysteine 39–cysteine 61, and cysteine 43–cysteine 63.

This sequence belongs to the long (4 C-C) scorpion toxin superfamily. Sodium channel inhibitor family. Beta subfamily. As to expression, expressed by the venom gland.

It is found in the secreted. In terms of biological role, beta toxins bind voltage-independently at site-4 of sodium channels (Nav) and shift the voltage of activation toward more negative potentials thereby affecting sodium channel activation and promoting spontaneous and repetitive firing. This toxin compete with high affinity with 125I-Css4 bound on rat brain synaptosome and may bind with high affinity to Nav1.1/SCN1A, Nav1.2/SCN2A and Nav1.6/SCN8A. This is Beta-neurotoxin Css9 from Centruroides suffusus (Durango bark scorpion).